Reading from the N-terminus, the 861-residue chain is Glucans biosynthesis glucosyltransferase H (861 aa).

Disordered stretches follow at residues 65-89 (RLSAREPAKGETPEPGGSTYGSVGR) and 101-129 (AGEPLLKRRPDGTVHVDTGPEPQRSSMVP). Basic and acidic residues-rich tracts occupy residues 67-76 (SAREPAKGET) and 105-114 (LLKRRPDGTV). 6 helical membrane-spanning segments follow: residues 181–201 (FLLGLVVAQTTLATYFMTKVL), 208–228 (LLEIAILVLFAVLFSWVSAGF), 532–552 (VFLTGIMAYLSAPLWFLFLLL), 589–609 (LFSATATLLFLPKVASILLLV), 616–636 (GGLPRLVMSMLIEVVLSALLA), and 698–718 (FVLWLLPIVGSLALSIPLSVM).

Belongs to the glycosyltransferase 2 family. OpgH subfamily.

The protein resides in the cell inner membrane. It participates in glycan metabolism; osmoregulated periplasmic glucan (OPG) biosynthesis. Functionally, involved in the biosynthesis of osmoregulated periplasmic glucans (OPGs). The protein is Glucans biosynthesis glucosyltransferase H of Cupriavidus pinatubonensis (strain JMP 134 / LMG 1197) (Cupriavidus necator (strain JMP 134)).